Reading from the N-terminus, the 57-residue chain is UPF0391 membrane protein BRADO5617 (57 aa).

2 consecutive transmembrane segments (helical) span residues Met1–Gly21 and Ile30–Leu50.

Belongs to the UPF0391 family.

It localises to the cell membrane. This is UPF0391 membrane protein BRADO5617 from Bradyrhizobium sp. (strain ORS 278).